Here is a 145-residue protein sequence, read N- to C-terminus: uncharacterized protein (145 aa).

It is found in the mitochondrion. This is an uncharacterized protein from Arabidopsis thaliana (Mouse-ear cress).